Reading from the N-terminus, the 199-residue chain is Imidazoleglycerol-phosphate dehydratase (199 aa).

Belongs to the imidazoleglycerol-phosphate dehydratase family.

The protein resides in the cytoplasm. It carries out the reaction D-erythro-1-(imidazol-4-yl)glycerol 3-phosphate = 3-(imidazol-4-yl)-2-oxopropyl phosphate + H2O. It participates in amino-acid biosynthesis; L-histidine biosynthesis; L-histidine from 5-phospho-alpha-D-ribose 1-diphosphate: step 6/9. The polypeptide is Imidazoleglycerol-phosphate dehydratase (Mesorhizobium japonicum (strain LMG 29417 / CECT 9101 / MAFF 303099) (Mesorhizobium loti (strain MAFF 303099))).